The chain runs to 815 residues: MPRYEPQEIESKWQKFWEKEGLFKTPQHSDLPKYYMLVMFPYPSGTLHVGHVKNYVIGDAVARYKRMRAYNVLHPFGYDAFGLPAENAAIERKIHPKDWTLNNINIIRRQIKKLGISYDWNREVITCLESYYKWTEWIFLKLYEAGLAYKKKAAVNWCPKCMTSLANEQVKDGRCERCDTPVTIKHLEQWFFKITDYAERLLKDLDKLTGWPEHVKTMQRNWIGESKGAKISFKVEESEMNIEVFTTRPDTLWGVTFMVLAPESDLVNHITLPELKGELEKFLNYVGQQDRHKRGSADVEKEGFFTGRYAINPVSGERIPIYVANYVLMEYGTGAVMGVPAHDQRDYEFAVKYNLPIKEVIKPSEDIPKNRAYDGPGIMVNSGPLNGTVVPEGIERVIQWLEERGIAKRSVQYKLRDWLISRQRYWGAPIPIVYCEKCGMVPVPEKSLPVQLPYDVEFLPTGQSPLMLNDEFRKTSCPKCGGPALRDADTMDTFVDSSWYFLRYVNPDRDDVPFVKEDVDHWLPVDQYVGGVEHAVLHLLYSRFITKVLYDLGYLSFDEPFENLFTQGMIYKDGAKMSKSKGNVVSPDEMIDRYGADTLRMYILFMGPPERDAEWNDAGIEGVYRFIRRAWSLMDQIISLPDNQNQVFAEEEKHLRRKLHISLRKVTQDMEGGFKFNTVVSSLMELVNDAYDYIDNLPQHRWNIKLLKELAKNFVLMISPFAPHFAEELWQRMGYSSSVMKEKWPEYDPDALVVEEVEIAIQVNGKLRDKVKIPVDATEDQIKEIALKSEKVRKYISDEPKKIIYVPKRLLNIIF.

The short motif at 41-51 (PYPSGTLHVGH) is the 'HIGH' region element. The short motif at 576 to 580 (KMSKS) is the 'KMSKS' region element. Lysine 579 contacts ATP.

The protein belongs to the class-I aminoacyl-tRNA synthetase family.

Its subcellular location is the cytoplasm. The enzyme catalyses tRNA(Leu) + L-leucine + ATP = L-leucyl-tRNA(Leu) + AMP + diphosphate. This Pseudothermotoga lettingae (strain ATCC BAA-301 / DSM 14385 / NBRC 107922 / TMO) (Thermotoga lettingae) protein is Leucine--tRNA ligase.